Reading from the N-terminus, the 333-residue chain is CMP-N-acetylneuraminate-beta-galactosamide-alpha-2,3-sialyltransferase 4 (333 aa).

Topologically, residues M1–K8 are cytoplasmic. Residues L9–S26 form a helical; Signal-anchor for type II membrane protein membrane-spanning segment. The Lumenal portion of the chain corresponds to R27–F333. Residues N61, N131, N310, and N329 are each glycosylated (N-linked (GlcNAc...) asparagine). C120 and C273 are oxidised to a cystine.

The protein belongs to the glycosyltransferase 29 family. The soluble form derives from the membrane form by proteolytic processing. In terms of tissue distribution, highly expressed in adult placenta, heart and kidney.

The protein localises to the golgi apparatus. The protein resides in the golgi stack membrane. Its subcellular location is the secreted. The enzyme catalyses a beta-D-galactosyl-(1-&gt;3)-N-acetyl-beta-D-galactosaminyl derivative + CMP-N-acetyl-beta-neuraminate = an N-acetyl-alpha-neuraminyl-(2-&gt;3)-beta-D-galactosyl-(1-&gt;3)-N-acetyl-beta-D-galactosaminyl derivative + CMP + H(+). It carries out the reaction a beta-D-galactosyl-(1-&gt;3)-N-acetyl-alpha-D-galactosaminyl derivative + CMP-N-acetyl-beta-neuraminate = an N-acetyl-alpha-neuraminyl-(2-&gt;3)-beta-D-galactosyl-(1-&gt;3)-N-acetyl-alpha-D-galactosaminyl derivative + CMP + H(+). The catalysed reaction is a beta-D-galactosyl-(1-&gt;4)-N-acetyl-beta-D-glucosaminyl derivative + CMP-N-acetyl-beta-neuraminate = an N-acetyl-alpha-neuraminyl-(2-&gt;3)-beta-D-galactosyl-(1-&gt;4)-N-acetyl-beta-D-glucosaminyl derivative + CMP + H(+). It catalyses the reaction a ganglioside GM1 (d18:1(4E)) + CMP-N-acetyl-beta-neuraminate = a ganglioside GD1a (d18:1(4E)) + CMP + H(+). The enzyme catalyses a ganglioside GA1 (d18:1(4E)) + CMP-N-acetyl-beta-neuraminate = a ganglioside GM1b (d18:1(4E)) + CMP + H(+). It carries out the reaction a ganglioside GT1c (d18:1(4E)) + CMP-N-acetyl-beta-neuraminate = a ganglioside GQ1c (d18:1(4E)) + CMP + H(+). The catalysed reaction is a neolactoside nLc4Cer + CMP-N-acetyl-beta-neuraminate = a neolactoside IV(3)-alpha-NeuAc-nLc4Cer + CMP + H(+). It catalyses the reaction a neolactoside nLc4Cer(d18:1(4E)) + CMP-N-acetyl-beta-neuraminate = a neolactoside IV(3)-alpha-NeuAc-nLc4Cer(d18:1(4E)) + CMP + H(+). It participates in protein modification; protein glycosylation. It functions in the pathway glycolipid biosynthesis. Its function is as follows. A beta-galactoside alpha2-3 sialyltransferase involved in terminal sialylation of glycoproteins and glycolipids. Catalyzes the transfer of sialic acid (N-acetyl-neuraminic acid; Neu5Ac) from the nucleotide sugar donor CMP-Neu5Ac onto acceptor Galbeta-(1-&gt;3)-GalNAc- and Galbeta-(1-&gt;4)-GlcNAc-terminated glycoconjugates through an alpha2-3 linkage. Plays a major role in hemostasis. Responsible for sialylation of plasma VWF/von Willebrand factor, preventing its recognition by asialoglycoprotein receptors (ASGPR) and subsequent clearance. Regulates ASGPR-mediated clearance of platelets. Participates in the biosynthesis of the sialyl Lewis X epitopes, both on O- and N-glycans, which are recognized by SELE/E-selectin, SELP/P-selectin and SELL/L-selectin. Essential for selectin-mediated rolling and adhesion of leukocytes during extravasation. Contributes to adhesion and transendothelial migration of neutrophils likely through terminal sialylation of CXCR2. In glycosphingolipid biosynthesis, sialylates GM1 and GA1 gangliosides to form GD1a and GM1b, respectively. Metabolizes brain c-series ganglioside GT1c forming GQ1c. Synthesizes ganglioside LM1 (IV3Neu5Ac-nLc4Cer), a major structural component of peripheral nerve myelin. This chain is CMP-N-acetylneuraminate-beta-galactosamide-alpha-2,3-sialyltransferase 4 (ST3GAL4), found in Homo sapiens (Human).